The following is an 847-amino-acid chain: Mitogen-activated protein kinase kinase kinase 11 (847 aa).

Serine 11 is modified (phosphoserine). The tract at residues 11-38 (SPLGSWNGSGSGGGGGGGGGRPEGSPKA) is disordered. Residues 17-32 (NGSGSGGGGGGGGGRP) show a composition bias toward gly residues. Residue serine 35 is modified to Phosphoserine. In terms of domain architecture, SH3 spans 41–105 (YANPVWTALF…PSNYVSRGGG (65 aa)). The Protein kinase domain maps to 117 to 379 (LRLEEVIGIG…ASILQQLEAL (263 aa)). Residues 123–131 (IGIGGFGKV) and lysine 144 each bind ATP. Catalysis depends on aspartate 241, which acts as the Proton acceptor. The residue at position 277 (threonine 277) is a Phosphothreonine; by autocatalysis. A Phosphoserine; by autocatalysis and MAP4K1 modification is found at serine 281. Serine 394 is subject to Phosphoserine. Leucine-zipper regions lie at residues 403-424 (IQGL…EEEL) and 438-459 (LRRR…ELTL). Residues serine 507, serine 524, serine 548, serine 555, and serine 556 each carry the phosphoserine modification. Residues 537–643 (PAEPGQAWGR…SSGTPKLIQR (107 aa)) are disordered. Over residues 550–562 (RRLEDSSNGERRA) the composition is skewed to basic and acidic residues. The span at 597–609 (SSPLGSPSTPPAL) shows a compositional bias: low complexity. Phosphoserine occurs at positions 654, 693, and 705. Residues 655 to 847 (LGLGRDLQPP…QAPWVPEAGP (193 aa)) are disordered. Positions 676–694 (TTPPTPTPAPCPTEPPPSP) are enriched in pro residues. Threonine 708 carries the post-translational modification Phosphothreonine. Residues serine 724, serine 727, serine 740, serine 748, serine 758, serine 770, serine 789, serine 793, and serine 815 each carry the phosphoserine modification. The span at 760-773 (PLGLISRPRPSPLR) shows a compositional bias: low complexity. Residues 787–799 (RPSPLPSPQPAPR) are compositionally biased toward pro residues. Low complexity predominate over residues 800-816 (RAPWTLFPDSDPFWDSP).

This sequence belongs to the protein kinase superfamily. STE Ser/Thr protein kinase family. MAP kinase kinase kinase subfamily. As to quaternary structure, homodimer; undergoes dimerization during activation. Interacts with MAP2K4/MKK4. Interacts with MAP2K7/MKK7. Found in a complex with SH3RF1, RAC1, MAP2K7/MKK7, MAPK8IP1/JIP1 and MAPK8/JNK1. Requires Mg(2+) as cofactor. Post-translationally, autophosphorylation on serine and threonine residues within the activation loop plays a role in enzyme activation. Thr-277 is likely to be the main autophosphorylation site. Phosphorylation of Ser-555 and Ser-556 is induced by CDC42. Expressed in a wide variety of normal and neoplastic tissues including fetal lung, liver, heart and kidney, and adult lung, liver, heart, kidney, placenta, skeletal muscle, pancreas and brain.

Its subcellular location is the cytoplasm. The protein resides in the cytoskeleton. It is found in the microtubule organizing center. The protein localises to the centrosome. The catalysed reaction is L-seryl-[protein] + ATP = O-phospho-L-seryl-[protein] + ADP + H(+). The enzyme catalyses L-threonyl-[protein] + ATP = O-phospho-L-threonyl-[protein] + ADP + H(+). Homodimerization via the leucine zipper domains is required for autophosphorylation and subsequent activation. In terms of biological role, activates the JUN N-terminal pathway. Required for serum-stimulated cell proliferation and for mitogen and cytokine activation of MAPK14 (p38), MAPK3 (ERK) and MAPK8 (JNK1) through phosphorylation and activation of MAP2K4/MKK4 and MAP2K7/MKK7. Plays a role in mitogen-stimulated phosphorylation and activation of BRAF, but does not phosphorylate BRAF directly. Influences microtubule organization during the cell cycle. In Homo sapiens (Human), this protein is Mitogen-activated protein kinase kinase kinase 11.